The primary structure comprises 346 residues: Selenoprotein V (346 aa).

Disordered regions lie at residues 1–40 (MNNQARTPAPSSARTSTSVRASTPTRTPTPLRTPTPVRTR) and 151–206 (LDPP…PGPT). Over residues 151 to 162 (LDPPPEPAPELP) the composition is skewed to pro residues. A cross-link (cysteinyl-selenocysteine (Cys-Sec); redox-active) is located at residues 270–273 (CGLU). Selenocysteine 273 is a non-standard amino acid (selenocysteine).

Belongs to the SelWTH family. Truncated SELENOV proteins produced by failed UGA/Sec decoding are ubiquitinated by the CRL2(APPBP2) complex, which recognizes the glycine (Gly) at the C-terminus of truncated SELENOV proteins. In terms of tissue distribution, testis specific.

Functionally, may be involved in a redox-related process. The protein is Selenoprotein V of Homo sapiens (Human).